Reading from the N-terminus, the 196-residue chain is Endoribonuclease YbeY (196 aa).

Residues His120, His124, and His130 each coordinate Zn(2+).

It belongs to the endoribonuclease YbeY family. Zn(2+) is required as a cofactor.

Its subcellular location is the cytoplasm. In terms of biological role, single strand-specific metallo-endoribonuclease involved in late-stage 70S ribosome quality control and in maturation of the 3' terminus of the 16S rRNA. This is Endoribonuclease YbeY from Corynebacterium glutamicum (strain R).